A 192-amino-acid chain; its full sequence is Adenylate kinase (192 aa).

Residue 10–15 (GAGKGT) participates in ATP binding. An NMP region spans residues 30–59 (STGDMLRTAVAQATEVGKRAKAVMDAGQLV). Residues T31, R36, 57-59 (QLV), 85-88 (GYPR), and Q92 each bind AMP. The LID stretch occupies residues 126 to 142 (NRVTETVAAGGTVRSDD). ATP is bound at residue R127. R139 and R150 together coordinate AMP. Residue A178 participates in ATP binding.

This sequence belongs to the adenylate kinase family. As to quaternary structure, monomer.

It localises to the cytoplasm. It catalyses the reaction AMP + ATP = 2 ADP. Its pathway is purine metabolism; AMP biosynthesis via salvage pathway; AMP from ADP: step 1/1. Functionally, catalyzes the reversible transfer of the terminal phosphate group between ATP and AMP. Plays an important role in cellular energy homeostasis and in adenine nucleotide metabolism. The polypeptide is Adenylate kinase (Rhizobium meliloti (strain 1021) (Ensifer meliloti)).